The sequence spans 122 residues: Large ribosomal subunit protein uL14c (122 aa).

This sequence belongs to the universal ribosomal protein uL14 family. Part of the 50S ribosomal subunit.

It localises to the plastid. It is found in the chloroplast. Its function is as follows. Binds to 23S rRNA. This is Large ribosomal subunit protein uL14c from Pyropia yezoensis (Susabi-nori).